The chain runs to 237 residues: Coat protein (237 aa).

Residues 1–24 (MSAPASTTQATGSTTSTTTKTAGA) are disordered.

The protein belongs to the potexvirus capsid protein family.

It is found in the virion. Its function is as follows. Required for genome encapsidation. Forms ribonucleoprotein complexes along with TGB1 helicase and viral RNA. The sequence is that of Coat protein from Brassica campestris (Field mustard).